A 219-amino-acid chain; its full sequence is Albonoursin synthase (219 aa).

Belongs to the nitroreductase family. Homomer. FMN serves as cofactor. In terms of processing, the N-terminus is blocked.

Its subcellular location is the cytoplasm. It catalyses the reaction cyclo(L-phenylalanyl-L-leucyl) + 2 O2 = albonoursin + 2 H2O2. Functionally, involved in the biosynthesis of albonoursin (cyclo[(alpha,beta-dehydro-Phe)-(alpha,beta-dehydro-Leu)]), an antibacterial peptide. Catalyzes the formation of alpha,beta-dehydro-Phe (DPhe) and alpha,beta-dehydro-Leu (DLeu) residues during the biosynthesis of albonoursin. The catalytic reaction of cyclo(L-Phe-L-Leu) occurs in a two-step sequential alpha-beta-dehydrogenation leading first to cyclo(alpha,beta-dehydro-Phe-L-Leu) and finally to albonoursin. Can also use cyclo(L-Phe-L-His), cyclo(L-Trp-L-Trp), cyclo(L-Leu-L-Ala), cyclo(L-Phe-Gly), cyclo(L-Leu-Gly), cyclo(L-Ser-Gly) and cyclo(L-Glu-Gly) as substrate suggesting that the diketopiperazine ring is essential for the enzymatic reaction. This chain is Albonoursin synthase (albA), found in Streptomyces noursei (Streptomyces albulus).